The following is a 62-amino-acid chain: Temporin-1PLa (62 aa).

The N-terminal stretch at M1–C22 is a signal peptide. A propeptide spanning residues E23–E45 is cleaved from the precursor. Residue I60 is modified to Isoleucine amide.

Expressed by the skin glands.

It is found in the secreted. Antimicrobial activity against the Gram-positive bacterium S.aureus. The protein is Temporin-1PLa of Lithobates palustris (Pickerel frog).